A 260-amino-acid chain; its full sequence is Indole-3-glycerol phosphate synthase (260 aa).

The protein belongs to the TrpC family.

It carries out the reaction 1-(2-carboxyphenylamino)-1-deoxy-D-ribulose 5-phosphate + H(+) = (1S,2R)-1-C-(indol-3-yl)glycerol 3-phosphate + CO2 + H2O. Its pathway is amino-acid biosynthesis; L-tryptophan biosynthesis; L-tryptophan from chorismate: step 4/5. In Lactiplantibacillus plantarum (strain ATCC BAA-793 / NCIMB 8826 / WCFS1) (Lactobacillus plantarum), this protein is Indole-3-glycerol phosphate synthase.